We begin with the raw amino-acid sequence, 140 residues long: Chorion class A protein Ld2/Ld41 (140 aa).

The signal sequence occupies residues 1–21 (MNSFALLLVCIQACLVQSVFS).

This sequence belongs to the chorion protein family.

Functionally, this protein is one of many from the eggshell of the gypsy moth. The protein is Chorion class A protein Ld2/Ld41 of Lymantria dispar (Gypsy moth).